The chain runs to 434 residues: Mannose-6-phosphate isomerase (434 aa).

3 residues coordinate Zn(2+): Gln-109, His-111, and Glu-136. A compositionally biased stretch (polar residues) spans Ser-181–Asp-191. Residues Ser-181 to Ser-200 are disordered. His-291 is a Zn(2+) binding site. Arg-310 is an active-site residue.

This sequence belongs to the mannose-6-phosphate isomerase type 1 family. The cofactor is Zn(2+).

It is found in the cytoplasm. The catalysed reaction is D-mannose 6-phosphate = D-fructose 6-phosphate. Its pathway is nucleotide-sugar biosynthesis; GDP-alpha-D-mannose biosynthesis; alpha-D-mannose 1-phosphate from D-fructose 6-phosphate: step 1/2. Its function is as follows. Involved in the synthesis of the GDP-mannose and dolichol-phosphate-mannose required for a number of critical mannosyl transfer reactions. In Cryptococcus neoformans var. neoformans serotype D (strain JEC21 / ATCC MYA-565) (Filobasidiella neoformans), this protein is Mannose-6-phosphate isomerase (MAN1).